We begin with the raw amino-acid sequence, 362 residues long: sn-glycerol-3-phosphate import ATP-binding protein UgpC (362 aa).

The 232-residue stretch at 4–235 (LSFRNVKKTY…PASTFVAGFI (232 aa)) folds into the ABC transporter domain. Residue 37–44 (GPSGCGKS) participates in ATP binding.

Belongs to the ABC transporter superfamily. sn-glycerol-3-phosphate importer (TC 3.A.1.1.3) family. As to quaternary structure, the complex is composed of two ATP-binding proteins (UgpC), two transmembrane proteins (UgpA and UgpE) and a solute-binding protein (UgpB).

The protein localises to the cell inner membrane. It catalyses the reaction sn-glycerol 3-phosphate(out) + ATP + H2O = sn-glycerol 3-phosphate(in) + ADP + phosphate + H(+). Its function is as follows. Part of the ABC transporter complex UgpBAEC involved in sn-glycerol-3-phosphate (G3P) import. Responsible for energy coupling to the transport system. This Bordetella bronchiseptica (strain ATCC BAA-588 / NCTC 13252 / RB50) (Alcaligenes bronchisepticus) protein is sn-glycerol-3-phosphate import ATP-binding protein UgpC.